Here is a 191-residue protein sequence, read N- to C-terminus: UPF0312 protein Sden_2128 (191 aa).

Positions 1-22 (MKKHLLASLLGASLLLPTAVNA) are cleaved as a signal peptide.

Belongs to the UPF0312 family. Type 1 subfamily.

Its subcellular location is the periplasm. In Shewanella denitrificans (strain OS217 / ATCC BAA-1090 / DSM 15013), this protein is UPF0312 protein Sden_2128.